We begin with the raw amino-acid sequence, 84 residues long: Large ribosomal subunit protein bL31 (84 aa).

2 disordered regions span residues 1-41 and 63-84; these read MQHD…DSTN and RRYGLTDDDEGDDEETEDAADE. Residues 21–30 are compositionally biased toward polar residues; that stretch reads EITTRSTMET. The segment covering 68-84 has biased composition (acidic residues); the sequence is TDDDEGDDEETEDAADE.

This sequence belongs to the bacterial ribosomal protein bL31 family. Type A subfamily. Part of the 50S ribosomal subunit.

Its function is as follows. Binds the 23S rRNA. The sequence is that of Large ribosomal subunit protein bL31 from Salinibacter ruber (strain DSM 13855 / M31).